The primary structure comprises 61 residues: Large ribosomal subunit protein bL32 (61 aa).

Positions 1–16 are enriched in basic residues; that stretch reads MAVPKRKTSPSKRGMR. The tract at residues 1–39 is disordered; the sequence is MAVPKRKTSPSKRGMRRSADALKAPTYIEDKNSGELRRP. Over residues 28–39 the composition is skewed to basic and acidic residues; that stretch reads IEDKNSGELRRP.

This sequence belongs to the bacterial ribosomal protein bL32 family.

The protein is Large ribosomal subunit protein bL32 of Rhizobium meliloti (strain 1021) (Ensifer meliloti).